Reading from the N-terminus, the 635-residue chain is 1-deoxy-D-xylulose-5-phosphate synthase (635 aa).

Thiamine diphosphate contacts are provided by residues His-78 and 119–121 (GHS). Asp-151 provides a ligand contact to Mg(2+). Thiamine diphosphate-binding positions include 152–153 (GA), Asn-180, Tyr-289, and Glu-371. Asn-180 lines the Mg(2+) pocket.

It belongs to the transketolase family. DXPS subfamily. As to quaternary structure, homodimer. The cofactor is Mg(2+). It depends on thiamine diphosphate as a cofactor.

It catalyses the reaction D-glyceraldehyde 3-phosphate + pyruvate + H(+) = 1-deoxy-D-xylulose 5-phosphate + CO2. The protein operates within metabolic intermediate biosynthesis; 1-deoxy-D-xylulose 5-phosphate biosynthesis; 1-deoxy-D-xylulose 5-phosphate from D-glyceraldehyde 3-phosphate and pyruvate: step 1/1. Catalyzes the acyloin condensation reaction between C atoms 2 and 3 of pyruvate and glyceraldehyde 3-phosphate to yield 1-deoxy-D-xylulose-5-phosphate (DXP). This chain is 1-deoxy-D-xylulose-5-phosphate synthase, found in Bartonella tribocorum (strain CIP 105476 / IBS 506).